Reading from the N-terminus, the 462-residue chain is EPD1-interacting receptor-like cytoplasmic serine/threonine-protein kinase 5A (462 aa).

Residues 85–366 form the Protein kinase domain; sequence FSSANFLGEG…DVVNILEPLL (282 aa). ATP is bound by residues 91–99 and lysine 120; that span reads LGEGGFGPV. Residues tyrosine 165 and tyrosine 167 each carry the phosphotyrosine modification. The Proton acceptor role is filled by aspartate 215.

The protein belongs to the protein kinase superfamily. Ser/Thr protein kinase family. Interacts with the Verticillium dahliae elicitor EPD1 (AC G2WWH6). Phosphorylated at Tyr-165 and Tyr-167 in the presence of pathogen-associated molecular patterns (PAMPs); this triggers the expression of pathogenesis-related genes (e.g. PR5 and PR16). As to expression, mostly expressed in roots and, to a lesser extent, in leaves.

It is found in the cell membrane. The enzyme catalyses L-seryl-[protein] + ATP = O-phospho-L-seryl-[protein] + ADP + H(+). It carries out the reaction L-threonyl-[protein] + ATP = O-phospho-L-threonyl-[protein] + ADP + H(+). Required for pathogen-associated molecular pattern (PAMP, e.g. chitin and flg22)-triggered immunity (PTI) involving reactive oxygen species (ROS) accumulation and triggering plant defense, including defense-related gene expression (e.g. PR1 and LOX). Ensures specific recognition of the EPD1 effector of Verticillium dahliae, resulting in a hypersensitive response known as effector-triggered immunity (ETI), characterized by the activation of programmed cell death to limit infection by the pathogen. Priming plants with the incompatible pathogen V.dahliae leads to an increased resistance to compatible pathogens, as a result of systemic acquired resistance (SAR). This chain is EPD1-interacting receptor-like cytoplasmic serine/threonine-protein kinase 5A, found in Gossypium barbadense (Sea Island cotton).